The sequence spans 428 residues: 4-hydroxy-3-methylbut-2-en-1-yl diphosphate synthase (flavodoxin) (428 aa).

Residues Cys315, Cys318, Cys361, and Glu368 each contribute to the [4Fe-4S] cluster site.

Belongs to the IspG family. [4Fe-4S] cluster is required as a cofactor.

The catalysed reaction is (2E)-4-hydroxy-3-methylbut-2-enyl diphosphate + oxidized [flavodoxin] + H2O + 2 H(+) = 2-C-methyl-D-erythritol 2,4-cyclic diphosphate + reduced [flavodoxin]. The protein operates within isoprenoid biosynthesis; isopentenyl diphosphate biosynthesis via DXP pathway; isopentenyl diphosphate from 1-deoxy-D-xylulose 5-phosphate: step 5/6. Its function is as follows. Converts 2C-methyl-D-erythritol 2,4-cyclodiphosphate (ME-2,4cPP) into 1-hydroxy-2-methyl-2-(E)-butenyl 4-diphosphate. The protein is 4-hydroxy-3-methylbut-2-en-1-yl diphosphate synthase (flavodoxin) of Ralstonia pickettii (strain 12J).